Consider the following 362-residue polypeptide: Chalcone synthase A (362 aa).

The active site involves Cys168.

The protein belongs to the thiolase-like superfamily. Chalcone/stilbene synthases family.

The enzyme catalyses (E)-4-coumaroyl-CoA + 3 malonyl-CoA + 3 H(+) = 2',4,4',6'-tetrahydroxychalcone + 3 CO2 + 4 CoA. Its pathway is secondary metabolite biosynthesis; flavonoid biosynthesis. In terms of biological role, the primary product of this enzyme is 4,2',4',6'-tetrahydroxychalcone (also termed naringenin-chalcone or chalcone) which can under specific conditions spontaneously isomerize into naringenin. This is Chalcone synthase A (CHSA) from Ipomoea platensis (Morning glory).